A 385-amino-acid chain; its full sequence is Serine/threonine-protein kinase H2 (385 aa).

One can recognise a Protein kinase domain in the interval 63–320 (YDIKALIGTG…AGQALDHPWV (258 aa)). Residues 69-77 (IGTGSFSRV) and K92 each bind ATP. Residues 342–367 (QRASPHSQSPGSAQSSKSHYSHKSRH) are disordered. Low complexity predominate over residues 344–359 (ASPHSQSPGSAQSSKS).

It belongs to the protein kinase superfamily. CAMK Ser/Thr protein kinase family.

The enzyme catalyses L-seryl-[protein] + ATP = O-phospho-L-seryl-[protein] + ADP + H(+). It catalyses the reaction L-threonyl-[protein] + ATP = O-phospho-L-threonyl-[protein] + ADP + H(+). In Homo sapiens (Human), this protein is Serine/threonine-protein kinase H2 (PSKH2).